A 256-amino-acid chain; its full sequence is Enkurin (256 aa).

Positions 83–89 (PKKPAVP) match the SH3-binding motif. The region spanning 160–252 (KRNEEIKKAQ…IIEKHKIIYI (93 aa)) is the Enkurin domain. Residues 160–255 (KRNEEIKKAQ…KHKIIYIANN (96 aa)) form an interaction with TRPC proteins region. The 12-residue stretch at 176-187 (IQENLKKAAMKR) folds into the IQ domain.

As to quaternary structure, microtubule inner protein component of sperm flagellar doublet microtubules. Binds calmodulin via its IQ domain. Interacts with TRPC1, TRPC2, TRPC5, but not TRPC3. Interacts with CFAP45. As to expression, expressed in airway epithelial cells.

It is found in the cytoplasm. It localises to the cytoskeleton. The protein localises to the cilium axoneme. Its subcellular location is the flagellum axoneme. Its function is as follows. Adapter that functions to localize a calcium-sensitive signal transduction machinery in sperm to a calcium-permeable ion channel. Microtubule inner protein (MIP) part of the dynein-decorated doublet microtubules (DMTs) in cilia axoneme, which is required for motile cilia beating. In Homo sapiens (Human), this protein is Enkurin.